Here is a 61-residue protein sequence, read N- to C-terminus: Large ribosomal subunit protein bL32 (61 aa).

A compositionally biased stretch (basic residues) spans 1 to 16 (MAVPKKKTSKSRKNMR). Positions 1–20 (MAVPKKKTSKSRKNMRRAHD) are disordered.

This sequence belongs to the bacterial ribosomal protein bL32 family.

This chain is Large ribosomal subunit protein bL32, found in Trichlorobacter lovleyi (strain ATCC BAA-1151 / DSM 17278 / SZ) (Geobacter lovleyi).